A 469-amino-acid polypeptide reads, in one-letter code: Asparagine--tRNA ligase (469 aa).

It belongs to the class-II aminoacyl-tRNA synthetase family. In terms of assembly, homodimer.

Its subcellular location is the cytoplasm. It carries out the reaction tRNA(Asn) + L-asparagine + ATP = L-asparaginyl-tRNA(Asn) + AMP + diphosphate + H(+). This chain is Asparagine--tRNA ligase, found in Porphyromonas gingivalis (strain ATCC BAA-308 / W83).